The chain runs to 254 residues: O-antigen biosynthesis glycosyltransferase WbnJ (254 aa).

This sequence belongs to the glycosyltransferase 2 family.

It carries out the reaction an N-acetyl-alpha-D-galactosaminyl derivative + UDP-alpha-D-galactose = a beta-D-galactosyl-(1-&gt;3)-N-acetyl-alpha-D-galactosaminyl derivative + UDP + H(+). It catalyses the reaction alpha-D-GalNAc-(1-&gt;3)-alpha-D-GalNAc-di-trans,octa-cis-undecaprenyl diphosphate + UDP-alpha-D-galactose = beta-D-Gal-(1-&gt;3)-alpha-D-GalNAc-(1-&gt;3)-alpha-D-GalNAc-di-trans,octa-cis-undecaprenyl diphosphate + UDP + H(+). Its pathway is bacterial outer membrane biogenesis; LPS O-antigen biosynthesis. In terms of biological role, involved in the assembly of the O-repeating unit during O-antigen biosynthesis. The protein is O-antigen biosynthesis glycosyltransferase WbnJ of Escherichia coli.